The following is a 183-amino-acid chain: UPF0302 protein BH1670 (183 aa).

The protein belongs to the UPF0302 family.

This is UPF0302 protein BH1670 from Halalkalibacterium halodurans (strain ATCC BAA-125 / DSM 18197 / FERM 7344 / JCM 9153 / C-125) (Bacillus halodurans).